The following is a 248-amino-acid chain: Probable transcriptional regulatory protein Bind_0345 (248 aa).

It belongs to the TACO1 family.

Its subcellular location is the cytoplasm. The chain is Probable transcriptional regulatory protein Bind_0345 from Beijerinckia indica subsp. indica (strain ATCC 9039 / DSM 1715 / NCIMB 8712).